A 249-amino-acid chain; its full sequence is MKLVLLRHGESEWNKENLFTGWMDVDLSETGKAEAASAGITLKQKGYDFDVCYTSYLKRAIHTLNLALDEMDRVWLPVVKSWKLNERHYGTLQGLNKSETAERYGEEQVKIWRRSYDIAPPLLKEEDERNPRFQEQYRQEKCEILPLGESLKDTIARVVPYYNEVILKDMMAGKRVLIAAHGNSLRALMKYLEDMSPEDILNVNLPTGIPLVYELDEEGKFISKEYLGDAEYVKAKIEKVSAQGKVTIE.

Residues 7–14, 20–21, Arg-59, 86–89, Lys-97, 113–114, and 182–183 contribute to the substrate site; these read RHGESEWN, TG, ERHY, RR, and GN. The active-site Tele-phosphohistidine intermediate is His-8. The active-site Proton donor/acceptor is the Glu-86.

This sequence belongs to the phosphoglycerate mutase family. BPG-dependent PGAM subfamily.

It catalyses the reaction (2R)-2-phosphoglycerate = (2R)-3-phosphoglycerate. The protein operates within carbohydrate degradation; glycolysis; pyruvate from D-glyceraldehyde 3-phosphate: step 3/5. Functionally, catalyzes the interconversion of 2-phosphoglycerate and 3-phosphoglycerate. The polypeptide is 2,3-bisphosphoglycerate-dependent phosphoglycerate mutase (Lachnoclostridium phytofermentans (strain ATCC 700394 / DSM 18823 / ISDg) (Clostridium phytofermentans)).